Consider the following 164-residue polypeptide: 6,7-dimethyl-8-ribityllumazine synthase (164 aa).

Residues Tyr-27, 58 to 60 (ALE), and 87 to 89 (CVI) each bind 5-amino-6-(D-ribitylamino)uracil. 92 to 93 (ET) is a (2S)-2-hydroxy-3-oxobutyl phosphate binding site. Residue His-95 is the Proton donor of the active site. Asn-120 provides a ligand contact to 5-amino-6-(D-ribitylamino)uracil. Residue Arg-134 participates in (2S)-2-hydroxy-3-oxobutyl phosphate binding.

This sequence belongs to the DMRL synthase family.

The enzyme catalyses (2S)-2-hydroxy-3-oxobutyl phosphate + 5-amino-6-(D-ribitylamino)uracil = 6,7-dimethyl-8-(1-D-ribityl)lumazine + phosphate + 2 H2O + H(+). The protein operates within cofactor biosynthesis; riboflavin biosynthesis; riboflavin from 2-hydroxy-3-oxobutyl phosphate and 5-amino-6-(D-ribitylamino)uracil: step 1/2. Its function is as follows. Catalyzes the formation of 6,7-dimethyl-8-ribityllumazine by condensation of 5-amino-6-(D-ribitylamino)uracil with 3,4-dihydroxy-2-butanone 4-phosphate. This is the penultimate step in the biosynthesis of riboflavin. The chain is 6,7-dimethyl-8-ribityllumazine synthase from Methylocella silvestris (strain DSM 15510 / CIP 108128 / LMG 27833 / NCIMB 13906 / BL2).